The primary structure comprises 1024 residues: Protein sumv-1 (1024 aa).

6 disordered regions span residues 447-486 (DASQ…KKMP), 501-564 (NFQG…RRGV), 577-617 (PSRH…RSQA), 645-664 (SQMA…GSPQ), 710-739 (VRSG…DTVQ), and 773-1024 (AGNS…EEEL). Composition is skewed to polar residues over residues 467 to 486 (SFGT…KKMP), 501 to 514 (NFQG…SSAT), and 528 to 542 (RSQQ…QTQD). Positions 584–600 (SPLTPSTSTSSSQLLAP) are enriched in low complexity. Over residues 605 to 617 (QPGTSSQTFRSQA) the composition is skewed to polar residues. Low complexity-rich tracts occupy residues 710-730 (VRSG…ASGS) and 784-809 (AGAP…ASTS). Residues 810–832 (VPEPTKSSESSVDPQSDVSFSNP) are compositionally biased toward polar residues. The segment covering 859-870 (TLASESTSSEAT) has biased composition (low complexity). The span at 873–883 (HDTTSSSSAET) shows a compositional bias: polar residues. The span at 903–914 (PEKEKEKIDRPK) shows a compositional bias: basic and acidic residues. Composition is skewed to low complexity over residues 916–943 (PKSS…NQAI), 952–962 (SASTSSSAAST), and 970–986 (LLAE…QQQA). Residues 987–998 (IGSTSKNGGSTK) show a composition bias toward polar residues.

The protein localises to the nucleus. It localises to the cytoplasm. Its subcellular location is the cell projection. The protein resides in the axon. Its function is as follows. Nuclear factor that influences the activity of genes involved in vulval development. The chain is Protein sumv-1 from Caenorhabditis elegans.